The sequence spans 149 residues: Large ribosomal subunit protein bL9 (149 aa).

Belongs to the bacterial ribosomal protein bL9 family.

Binds to the 23S rRNA. This Helicobacter pylori (strain J99 / ATCC 700824) (Campylobacter pylori J99) protein is Large ribosomal subunit protein bL9.